Consider the following 1295-residue polypeptide: Unconventional myosin-VI (1295 aa).

Positions Glu2–Glu53 constitute a Myosin N-terminal SH3-like domain. Positions Lys57–Lys771 constitute a Myosin motor domain. Gly151 to Thr158 provides a ligand contact to ATP. The residue at position 267 (Ser267) is a Phosphoserine. The responsible for slow ATPase activity stretch occupies residues Tyr273–Phe317. Residue Thr405 is modified to Phosphothreonine. Ser604 is modified (phosphoserine). Positions Leu651–Leu673 are actin-binding. The interval Lys782–Ile810 is required for binding calmodulin. The IQ domain occupies Arg813–Lys842. The three-helix bundle stretch occupies residues Pro835 to Lys916. Residues Lys917 to Glu984 are SAH. A disordered region spans residues Glu934–Arg955. The interval Lys1061 to Ala1286 is interaction with TAX1BP1 and CALCOCO2/NDP52. The interval Arg1117 to Leu1119 is interaction with OPTN. Ser1156 carries the phosphoserine modification. The tract at residues Gln1158–Ala1286 is interaction with TOM1.

It belongs to the TRAFAC class myosin-kinesin ATPase superfamily. Myosin family. In terms of assembly, homodimer; dimerization seems to implicate the unfolding of the three-helix bundle region creating an additional calmodulin binding site, and cargo binding. Able to function as a monomer under specific conditions in vitro. Forms a complex with CFTR and DAB2 in the apical membrane of epithelial cells. Component of the DISP/DOCK7-induced septin displacement complex, at least composed of DOCK7, LRCH3 and MYO6. Binding to calmodulin through a unique insert, not found in other myosins, located in the neck region between the motor domain and the IQ domain appears to contribute to the directionality reversal. This interaction occurs only if the C-terminal lobe of calmodulin is occupied by calcium. Interaction with F-actin/ACTN1 occurs only at the apical brush border domain of the proximal tubule cells. Interacts with DAB2. In vitro, the C-terminal globular tail binds a C-terminal region of DAB2. Interacts with CFTR. Interacts with CABP5. Interacts (via residues 1158-1286) with TOM1 (via residues 392-463). Interacts (via residues 1060-1285) with OPTN. Interacts (via residues 1060-1285) with TAX1BP1 and CALCOCO2/NDP52. Interacts with TOM1L2. Interacts with CLIC5; may work together in a complex which also includes RDX and MYO6 to stabilize linkages between the plasma membrane and subjacent actin cytoskeleton at the base of stereocilia. Phosphorylation in the motor domain, induced by EGF, results in translocation of MYO6 from the cell surface to membrane ruffles and affects F-actin dynamics. Phosphorylated in vitro by p21-activated kinase (PAK). Expressed in the retina (at protein level).

The protein localises to the golgi apparatus. It is found in the trans-Golgi network membrane. It localises to the nucleus. The protein resides in the cytoplasm. Its subcellular location is the perinuclear region. The protein localises to the membrane. It is found in the clathrin-coated pit. It localises to the cytoplasmic vesicle. The protein resides in the clathrin-coated vesicle. Its subcellular location is the cell projection. The protein localises to the filopodium. It is found in the ruffle membrane. It localises to the microvillus. The protein resides in the cytosol. Its function is as follows. Myosins are actin-based motor molecules with ATPase activity. Unconventional myosins serve in intracellular movements. Myosin 6 is a reverse-direction motor protein that moves towards the minus-end of actin filaments. Has slow rate of actin-activated ADP release due to weak ATP binding. Functions in a variety of intracellular processes such as vesicular membrane trafficking and cell migration. Required for the structural integrity of the Golgi apparatus via the p53-dependent pro-survival pathway. Appears to be involved in a very early step of clathrin-mediated endocytosis in polarized epithelial cells. Together with TOM1, mediates delivery of endocytic cargo to autophagosomes thereby promoting autophagosome maturation and driving fusion with lysosomes. Links TOM1 with autophagy receptors, such as TAX1BP1; CALCOCO2/NDP52 and OPTN. May act as a regulator of F-actin dynamics. As part of the DISP complex, may regulate the association of septins with actin and thereby regulate the actin cytoskeleton. May play a role in transporting DAB2 from the plasma membrane to specific cellular targets. May play a role in the extension and network organization of neurites. Required for structural integrity of inner ear hair cells. Required for the correct localization of CLIC5 and RDX at the stereocilium base. Modulates RNA polymerase II-dependent transcription. The chain is Unconventional myosin-VI from Bos taurus (Bovine).